The following is a 355-amino-acid chain: N-acetyl-gamma-glutamyl-phosphate reductase (355 aa).

Residue Cys-152 is part of the active site.

It belongs to the NAGSA dehydrogenase family. Type 1 subfamily.

It localises to the cytoplasm. The enzyme catalyses N-acetyl-L-glutamate 5-semialdehyde + phosphate + NADP(+) = N-acetyl-L-glutamyl 5-phosphate + NADPH + H(+). The protein operates within amino-acid biosynthesis; L-arginine biosynthesis; N(2)-acetyl-L-ornithine from L-glutamate: step 3/4. Functionally, catalyzes the NADPH-dependent reduction of N-acetyl-5-glutamyl phosphate to yield N-acetyl-L-glutamate 5-semialdehyde. This Psychrobacter arcticus (strain DSM 17307 / VKM B-2377 / 273-4) protein is N-acetyl-gamma-glutamyl-phosphate reductase.